The following is a 318-amino-acid chain: Methionyl-tRNA formyltransferase (318 aa).

114–117 (SLLP) is a binding site for (6S)-5,6,7,8-tetrahydrofolate.

This sequence belongs to the Fmt family.

The catalysed reaction is L-methionyl-tRNA(fMet) + (6R)-10-formyltetrahydrofolate = N-formyl-L-methionyl-tRNA(fMet) + (6S)-5,6,7,8-tetrahydrofolate + H(+). Attaches a formyl group to the free amino group of methionyl-tRNA(fMet). The formyl group appears to play a dual role in the initiator identity of N-formylmethionyl-tRNA by promoting its recognition by IF2 and preventing the misappropriation of this tRNA by the elongation apparatus. This Protochlamydia amoebophila (strain UWE25) protein is Methionyl-tRNA formyltransferase.